We begin with the raw amino-acid sequence, 154 residues long: uncharacterized protein (154 aa).

A Phosphoserine modification is found at Ser-47.

To yeast YPL229w.

This is an uncharacterized protein from Saccharomyces cerevisiae (strain ATCC 204508 / S288c) (Baker's yeast).